Here is a 478-residue protein sequence, read N- to C-terminus: Aspartyl/glutamyl-tRNA(Asn/Gln) amidotransferase subunit B 1 (478 aa).

This sequence belongs to the GatB/GatE family. GatB subfamily. In terms of assembly, heterotrimer of A, B and C subunits.

It carries out the reaction L-glutamyl-tRNA(Gln) + L-glutamine + ATP + H2O = L-glutaminyl-tRNA(Gln) + L-glutamate + ADP + phosphate + H(+). The enzyme catalyses L-aspartyl-tRNA(Asn) + L-glutamine + ATP + H2O = L-asparaginyl-tRNA(Asn) + L-glutamate + ADP + phosphate + 2 H(+). Functionally, allows the formation of correctly charged Asn-tRNA(Asn) or Gln-tRNA(Gln) through the transamidation of misacylated Asp-tRNA(Asn) or Glu-tRNA(Gln) in organisms which lack either or both of asparaginyl-tRNA or glutaminyl-tRNA synthetases. The reaction takes place in the presence of glutamine and ATP through an activated phospho-Asp-tRNA(Asn) or phospho-Glu-tRNA(Gln). This Syntrophus aciditrophicus (strain SB) protein is Aspartyl/glutamyl-tRNA(Asn/Gln) amidotransferase subunit B 1.